Here is a 49-residue protein sequence, read N- to C-terminus: Photosystem I reaction center subunit IX (49 aa).

The helical transmembrane segment at 14-34 threads the bilayer; that stretch reads FISTAPVAATIWLTITAGILI.

This sequence belongs to the PsaJ family.

Its subcellular location is the cellular thylakoid membrane. May help in the organization of the PsaE and PsaF subunits. The protein is Photosystem I reaction center subunit IX of Nostoc punctiforme (strain ATCC 29133 / PCC 73102).